The sequence spans 639 residues: Bone morphogenetic protein 1 homolog (639 aa).

Residues 1–23 (MDLLYYMTVSLLGFILSLTTFIG) form the signal peptide. A propeptide spanning residues 24-109 (ETTRALSDDV…RAVTARPERR (86 aa)) is cleaved from the precursor. One can recognise a Peptidase M12A domain in the interval 100–305 (RAVTARPERR…IQANLLYKCP (206 aa)). N122 and N140 each carry an N-linked (GlcNAc...) asparagine glycan. 6 disulfides stabilise this stretch: C143-C304, C167-C189, C169-C170, C307-C333, C360-C382, and C420-C446. H197 contacts Zn(2+). E198 is an active-site residue. Zn(2+) contacts are provided by H201 and H207. CUB domains lie at 307–419 (CGRT…YEAI) and 420–531 (CGGH…DFFK). An N-linked (GlcNAc...) asparagine glycan is attached at N317. Residue N455 is glycosylated (N-linked (GlcNAc...) asparagine). 4 cysteine pairs are disulfide-bonded: C473-C495, C536-C548, C544-C557, and C559-C572. The EGF-like; calcium-binding domain occupies 532-573 (EKDECAQPDQGGCMDVCVNTIGSYRCDCRPGYELSSDGRRCE).

The cofactor is Zn(2+). Ectodermal and primary mesenchyme cells in hatched blastula.

This chain is Bone morphogenetic protein 1 homolog, found in Strongylocentrotus purpuratus (Purple sea urchin).